A 186-amino-acid polypeptide reads, in one-letter code: Dihydrofolate reductase (186 aa).

The DHFR domain maps to 3 to 184; it reads PLNCIVAVSQ…IKYKFEVYEK (182 aa). NADP(+) is bound by residues Ala-9 and 15–21; that span reads GIGKNGD. 30–35 is a substrate binding site; sequence EYKYFQ. An N6-acetyllysine; alternate modification is found at Lys-32. Lys-32 bears the N6-succinyllysine; alternate mark. 54-56 contacts NADP(+); that stretch reads RKT. Residue Arg-70 participates in substrate binding. NADP(+) is bound by residues 76–78 and 116–123; these read SRE and GGSSVYKE. Cys-162 carries the post-translational modification Cysteine derivative; partial.

Belongs to the dihydrofolate reductase family. As to quaternary structure, homodimer.

Its subcellular location is the mitochondrion. It localises to the cytoplasm. It carries out the reaction (6S)-5,6,7,8-tetrahydrofolate + NADP(+) = 7,8-dihydrofolate + NADPH + H(+). It participates in cofactor biosynthesis; tetrahydrofolate biosynthesis; 5,6,7,8-tetrahydrofolate from 7,8-dihydrofolate: step 1/1. Functionally, key enzyme in folate metabolism. Contributes to the de novo mitochondrial thymidylate biosynthesis pathway. Catalyzes an essential reaction for de novo glycine and purine synthesis, and for DNA precursor synthesis. Binds its own mRNA and that of DHFR2. The sequence is that of Dihydrofolate reductase (DHFR) from Sus scrofa (Pig).